The following is a 560-amino-acid chain: Thermosome subunit alpha (560 aa).

The span at 535–547 (SEKKGGEGSKEES) shows a compositional bias: basic and acidic residues. The disordered stretch occupies residues 535–560 (SEKKGGEGSKEESGGEGGAGTPSLGD).

It belongs to the TCP-1 chaperonin family. Forms a heterooligomeric complex of two stacked nine-membered rings; one of alpha and the other of beta subunits. Sometimes called a 'rosettasome'.

The protein resides in the cytoplasm. The catalysed reaction is ATP + H2O = ADP + phosphate + H(+). Its function is as follows. Molecular chaperone; binds unfolded polypeptides in vitro, stimulates protein folding and has ATPase activity. One of the most abundant proteins in the cell at all temperatures. The protein is Thermosome subunit alpha (thsA) of Saccharolobus shibatae (strain ATCC 51178 / DSM 5389 / JCM 8931 / NBRC 15437 / B12) (Sulfolobus shibatae).